An 81-amino-acid polypeptide reads, in one-letter code: MAHTVKIYDTCIGCTQCVRACPTDVLEMVPWDGCKAGQIASSPRTEDCVGCKRCETACPTDFLSIRVYLGAETTRSMGLAY.

2 4Fe-4S ferredoxin-type domains span residues 2–31 (AHTV…MVPW) and 37–68 (GQIA…IRVY). [4Fe-4S] cluster-binding residues include cysteine 11, cysteine 14, cysteine 17, cysteine 21, cysteine 48, cysteine 51, cysteine 54, and cysteine 58.

The cyanobacterial PSI reaction center is composed of one copy each of PsaA,B,C,D,E,F,I,J,K,L,M and X, and forms trimeric complexes. The cofactor is [4Fe-4S] cluster.

It localises to the cellular thylakoid membrane. It carries out the reaction reduced [plastocyanin] + hnu + oxidized [2Fe-2S]-[ferredoxin] = oxidized [plastocyanin] + reduced [2Fe-2S]-[ferredoxin]. Apoprotein for the two 4Fe-4S centers FA and FB of photosystem I (PSI); essential for photochemical activity. FB is the terminal electron acceptor of PSI, donating electrons to ferredoxin. The C-terminus interacts with PsaA/B/D and helps assemble the protein into the PSI complex. Required for binding of PsaD and PsaE to PSI. PSI is a plastocyanin/cytochrome c6-ferredoxin oxidoreductase, converting photonic excitation into a charge separation, which transfers an electron from the donor P700 chlorophyll pair to the spectroscopically characterized acceptors A0, A1, FX, FA and FB in turn. This is Photosystem I iron-sulfur center (psaC) from Synechococcus elongatus.